A 120-amino-acid chain; its full sequence is Large ribosomal subunit protein uL22 (120 aa).

The segment at 1 to 20 is disordered; sequence MFVNRRYTARGKNLPSSPKK.

This sequence belongs to the universal ribosomal protein uL22 family. As to quaternary structure, part of the 50S ribosomal subunit.

Functionally, this protein binds specifically to 23S rRNA; its binding is stimulated by other ribosomal proteins, e.g. L4, L17, and L20. It is important during the early stages of 50S assembly. It makes multiple contacts with different domains of the 23S rRNA in the assembled 50S subunit and ribosome. The globular domain of the protein is located near the polypeptide exit tunnel on the outside of the subunit, while an extended beta-hairpin is found that lines the wall of the exit tunnel in the center of the 70S ribosome. This is Large ribosomal subunit protein uL22 from Borrelia turicatae (strain 91E135).